A 550-amino-acid polypeptide reads, in one-letter code: MFCVQCEQTIRTPVGNGCSYAQGMCGKTAETSDLQDLLVAVLQGLSAWALKARELDIIDHDVDNFAPRAFFSTLTNVNFDSQRIIGYAQEAITLRESLAVRCRLHDATATVDHPMAALQLAGNDIPTLLQQAEDFALDSDKAIVGDDVHGLRMLNLYGLKGAAAYMEHAHVLGQYDNAIYAEYHAFMAWLGTQPTDVDTLLNNAMGIGKMNFNVMAILDHGETDAYGHPQPTSVNVRPIAGKAILISGHDLKDLRMLLEQTEGTGVNIYTHGEMLPAHGYPELKKFKHLAGNYGSGWQNQQTEFAKFPGAIVMTSNCIIDPNVGNYGDRIWTRSIVGWPGVNHLEGDDFSSVIEQAQGLAGFPYSEIEHMITVGFGRETLLSAADTVIDLVAQKKLRHVFLVGGCDGSREERSYFTDFTLSVPQDCLIMTLACGKYRFNKLDFGTLEGLPRLLDVGQCNDAYAAIILAVKLAEKLGCGVNDLPLSLVLSWFEQKAIVILLTLLSLGVKNIYTGPTAPGFLTDNLLAILNDKFGMRAITTVEQDMNTILAA.

[2Fe-2S] cluster is bound by residues C3, C6, C18, and C25. Residues H249, E273, C317, C405, C433, C458, E492, and K494 each coordinate hybrid [4Fe-2O-2S] cluster. C405 is subject to Cysteine persulfide.

Belongs to the HCP family. [2Fe-2S] cluster serves as cofactor. Requires hybrid [4Fe-2O-2S] cluster as cofactor.

The protein localises to the cytoplasm. It catalyses the reaction A + NH4(+) + H2O = hydroxylamine + AH2 + H(+). Its function is as follows. Catalyzes the reduction of hydroxylamine to form NH(3) and H(2)O. The polypeptide is Hydroxylamine reductase (Pectobacterium atrosepticum (strain SCRI 1043 / ATCC BAA-672) (Erwinia carotovora subsp. atroseptica)).